Reading from the N-terminus, the 421-residue chain is Testin (421 aa).

The region spanning 92–199 (MILTNPVAAK…GDVKLPRDMN (108 aa)) is the PET domain. Disordered stretches follow at residues 133 to 164 (EKQP…PSKC) and 193 to 213 (KLPR…GGDR). The span at 155–164 (PAHDQDPSKC) shows a compositional bias: basic and acidic residues. 3 LIM zinc-binding domains span residues 234 to 297 (YSCY…CDSE), 299 to 359 (PRCA…NHAV), and 362 to 421 (QGCH…KMMS).

It belongs to the prickle / espinas / testin family. Interacts via LIM domain 1 with ZYX. Interacts (via LIM domain 3) with ENAH and VASP. Interacts with ALKBH4, talin, actin, alpha-actinin, GRIP1 and PXN. Interacts (via LIM domain 2) with ACTL7A (via N-terminus). Heterodimer with ACTL7A; the heterodimer interacts with ENAH to form a heterotrimer.

The protein resides in the cytoplasm. It localises to the cell junction. The protein localises to the focal adhesion. In terms of biological role, scaffold protein that may play a role in cell adhesion, cell spreading and in the reorganization of the actin cytoskeleton. Plays a role in the regulation of cell proliferation. May act as a tumor suppressor. The sequence is that of Testin (TES) from Muntiacus muntjak (Barking deer).